The primary structure comprises 2077 residues: MKIITSSTNQNDSKYGPRAGKQCMSNSFSFLHTVYLNGINNSLNAGTIDAIMEEGYHLDTAGTLALMLNNSDSQDYRLPTEIPKRIHSRYGVTQHELSRPFNGTLDTQKIDNEVYLGLIDFILYGKSKNGPTFAVITIGVLSRALFFLNNTLYLFDSHPTEREATAAIYICQNIEEVYELLTTHGTEGFYYDASLIFFIETSNLSLSSHDAELLILKTYKDPDIAIALDKFSSTEIHEIKKTDDIGSQQDLVADKTTDLEHAPHKRKKNSHSLELELNDKKKKDTASLTYYATEVDLIPSFYELRSQFQSLFHDLKSFPIMKSNFNWTIYLQDSPINPNQPFATPFLWNRVFHLLCQIIDVFVGVGSTNDDSSKQQQQTIFINYLLPFKDFSEVFNEALAACQENNLDIIFIYNNYLCKTTTFRTLERILLSKFLAIVDNDHKKHYEWVKSWTTQMFQGMPKKLDDIENYLKAYVDHNPVKHFHEFICLNKAEKYKVAVLLNEKRKEIQEAIEREKNSFAQLSNFIDKLGETPALPIESENVHKVHTSDITEGIVPRFITESIELPNISTLNNTQQISLDKQLNEKLTNTIHTLTNKFTKIVQDNYNNIAAGFMPVTELNCLFAYLVNLYFNIEVLKHSGLNINTVLLQEVEKLYDNTQFLRFGTSHFNINNLSNFTLSIRKMFVDFYNSQKPSDRASEILAAIESILADPSKNKTVVNIEMIKSQLEELGKMEISTTENKQTAAITKQILGDQELTPIYDFLHHLSAYNLPNTTTVKNLHLHFILEQRPDIAMTLHDKIQSILDIYVDDMLNDITVPEQTFSTVLFLVDLFPNSTEKTALFESVLTLRQLAKKCANLKTLDEFDDLAQFITTNSEQLQNMMRQHFGKKIPTLMGHIKFLYSQKIITTEEKNWIQRAKTVVITSPEELTAFLATAPTKHALQTCKPDLDKALQRHMEEQMKQTAENDKKHILTIRSTLEKRLTDILLILKDGQFSSLETMHLNLLETFLKQLQDNNVIIHFTHALLPVLKDIETTISKIISDVIEKILIKTPLNPEQMSKEEQKYTPLLSFLSKFKKTTFCTEDVKTEIEQVQKSITFLKKIATSTNKHTRLSHSIYGQELNLYEERITELRKETNKMKEQLSKEYALAEKKILLSSQDAKTDKIYLVLNTHTLKEIKNTQFKETAFAKALTVEVNNKENQLQELLNHFNAHLKAKMDQNHITKLSFDTKWTAFVSDSRLYIPDFINIKLQDFISDPFKVISQLMNKATNEMPYIQAEITLKWLTKLIHDINKFCLSAISEFGKEAIPFNYAALRDLEYQINTKYVEIENKVICNETVENTKNIPKLTKLLKQLDPKRVAGGQEQYQTLMNKILTSETSMQQTYEKEQLKKEYFEIVNNVASFKLAFNFPQQLQNVERLIEKFKSLPKSQPFEKFPQENDLLSDSLNTENYINGLRALLNFITAAQNYIQNTLLKQWAVFQQQNFIPIDYSVANVKPISDLYARLRIERERQVFYQVNSVFGTHLIVDDTGVPLQFHNIFNNAIVKFFSLNYKQINVPEDTPRLVSSQYKLLSVCKSFIMILQQFWENIITLDLGPYLRDGTQNFKRELIPIVNLKLFIYCITQAWTASEDSTVSTAFELPIKQFTLLILCSHPEYLYGCLSHSTDLVINSLAKSIDKNSLYNTFVVSHNPPEKPMHLMRNICIDTQLWQPAKLMKDTFQQTFFTQLCPKNEKFFIYLTAFLILPYKFMNYIWIQYKPAIFTQRSYQNLIKDLCSEYVHQNKITTSSVTPHEPDTIKSGERITSKITVHKAQNTPTLTRLQAQEYVFDYILYSFLTGYEMTFAMYIDIIEKTYLLCMRHLENVLHDKDFQSVLRARTFDIDYILKQSWTKNIVEHSLFSVQLDKIVSYLNHTNRATPNIPLILFNYDNEVVNVYLPPMSTNPKKVAFYIKNPFHFPVQEYEATNLISFHLYPKTTDILNQLPPNNTESTRPGKQTSETLTNKNLSEPKFKKPAVTGLMPKSQSIILSTDTNVPETSPDVKANTASAAIKDVTLAREKINEFSESINTTISKLKSMYL.

A deubiquitination activity region spans residues 1–231; the sequence is MKIITSSTNQ…PDIAIALDKF (231 aa). In terms of domain architecture, Peptidase C76 spans 3–221; the sequence is IITSSTNQND…ELLILKTYKD (219 aa). Catalysis depends on residues cysteine 23, aspartate 156, and histidine 158. Serine 287 is a region of interest (interaction with inner tegument protein). The interval 1982-2004 is disordered; sequence PPNNTESTRPGKQTSETLTNKNL.

This sequence belongs to the herpesviridae large tegument protein family. In terms of assembly, interacts with host CUL1 and CUL4A; these interactions inhibit the E3 ligase activity of cullins. Interacts with inner tegument protein. Interacts with capsid vertex specific component CVC2. Interacts with the major capsid protein/MCP.

The protein resides in the virion tegument. The protein localises to the host cytoplasm. It is found in the host nucleus. It carries out the reaction Thiol-dependent hydrolysis of ester, thioester, amide, peptide and isopeptide bonds formed by the C-terminal Gly of ubiquitin (a 76-residue protein attached to proteins as an intracellular targeting signal).. Large tegument protein that plays multiple roles in the viral cycle. During viral entry, remains associated with the capsid while most of the tegument is detached and participates in the capsid transport toward the host nucleus. Plays a role in the routing of the capsid at the nuclear pore complex and subsequent uncoating. Within the host nucleus, acts as a deneddylase and promotes the degradation of nuclear CRLs (cullin-RING ubiquitin ligases) and thereby stabilizes nuclear CRL substrates, while cytoplasmic CRLs remain unaffected. These modifications prevent host cell cycle S-phase progression and create a favorable environment allowing efficient viral genome replication. Participates later in the secondary envelopment of capsids. Indeed, plays a linker role for the association of the outer viral tegument to the capsids together with the inner tegument protein. In Homo sapiens (Human), this protein is Large tegument protein deneddylase (U31).